The chain runs to 547 residues: Dihydroxy-acid dehydratase (547 aa).

Aspartate 78 lines the Mg(2+) pocket. Cysteine 119 lines the [2Fe-2S] cluster pocket. 2 residues coordinate Mg(2+): aspartate 120 and lysine 121. Residue lysine 121 is modified to N6-carboxylysine. Cysteine 191 provides a ligand contact to [2Fe-2S] cluster. Position 439 (glutamate 439) interacts with Mg(2+). Serine 464 functions as the Proton acceptor in the catalytic mechanism.

It belongs to the IlvD/Edd family. Homodimer. It depends on [2Fe-2S] cluster as a cofactor. Requires Mg(2+) as cofactor.

It carries out the reaction (2R)-2,3-dihydroxy-3-methylbutanoate = 3-methyl-2-oxobutanoate + H2O. It catalyses the reaction (2R,3R)-2,3-dihydroxy-3-methylpentanoate = (S)-3-methyl-2-oxopentanoate + H2O. It participates in amino-acid biosynthesis; L-isoleucine biosynthesis; L-isoleucine from 2-oxobutanoate: step 3/4. Its pathway is amino-acid biosynthesis; L-valine biosynthesis; L-valine from pyruvate: step 3/4. Functionally, functions in the biosynthesis of branched-chain amino acids. Catalyzes the dehydration of (2R,3R)-2,3-dihydroxy-3-methylpentanoate (2,3-dihydroxy-3-methylvalerate) into 2-oxo-3-methylpentanoate (2-oxo-3-methylvalerate) and of (2R)-2,3-dihydroxy-3-methylbutanoate (2,3-dihydroxyisovalerate) into 2-oxo-3-methylbutanoate (2-oxoisovalerate), the penultimate precursor to L-isoleucine and L-valine, respectively. The polypeptide is Dihydroxy-acid dehydratase (Methanospirillum hungatei JF-1 (strain ATCC 27890 / DSM 864 / NBRC 100397 / JF-1)).